Consider the following 90-residue polypeptide: Small ribosomal subunit protein uS17 (90 aa).

Belongs to the universal ribosomal protein uS17 family. Part of the 30S ribosomal subunit.

Functionally, one of the primary rRNA binding proteins, it binds specifically to the 5'-end of 16S ribosomal RNA. This Acidiphilium cryptum (strain JF-5) protein is Small ribosomal subunit protein uS17.